Consider the following 186-residue polypeptide: Trafficking protein particle complex subunit 3 (186 aa).

This sequence belongs to the TRAPP small subunits family. BET3 subfamily. Homodimer. Part of the multisubunit TRAPP (transport protein particle) complex.

The protein resides in the golgi apparatus. It is found in the cis-Golgi network. It localises to the endoplasmic reticulum. Its function is as follows. May play a role in vesicular transport from endoplasmic reticulum to Golgi. The chain is Trafficking protein particle complex subunit 3 (trappc3) from Dictyostelium discoideum (Social amoeba).